A 600-amino-acid chain; its full sequence is Elongation factor 4 (600 aa).

Residues 4–186 form the tr-type G domain; that stretch reads SKIRNFSIIA…AIVDKIPPPS (183 aa). GTP contacts are provided by residues 16 to 21 and 133 to 136; these read DHGKST and NKID.

Belongs to the TRAFAC class translation factor GTPase superfamily. Classic translation factor GTPase family. LepA subfamily.

The protein localises to the cell membrane. It carries out the reaction GTP + H2O = GDP + phosphate + H(+). Its function is as follows. Required for accurate and efficient protein synthesis under certain stress conditions. May act as a fidelity factor of the translation reaction, by catalyzing a one-codon backward translocation of tRNAs on improperly translocated ribosomes. Back-translocation proceeds from a post-translocation (POST) complex to a pre-translocation (PRE) complex, thus giving elongation factor G a second chance to translocate the tRNAs correctly. Binds to ribosomes in a GTP-dependent manner. This is Elongation factor 4 from Mycoplasma capricolum subsp. capricolum (strain California kid / ATCC 27343 / NCTC 10154).